Reading from the N-terminus, the 508-residue chain is Histidine ammonia-lyase (508 aa).

A cross-link (5-imidazolinone (Ala-Gly)) is located at residues 141 to 143 (ASG). Ser-142 is modified (2,3-didehydroalanine (Ser)).

This sequence belongs to the PAL/histidase family. Contains an active site 4-methylidene-imidazol-5-one (MIO), which is formed autocatalytically by cyclization and dehydration of residues Ala-Ser-Gly.

The protein localises to the cytoplasm. It catalyses the reaction L-histidine = trans-urocanate + NH4(+). It participates in amino-acid degradation; L-histidine degradation into L-glutamate; N-formimidoyl-L-glutamate from L-histidine: step 1/3. The polypeptide is Histidine ammonia-lyase (Geobacillus sp. (strain WCH70)).